The primary structure comprises 154 residues: Interleukin-2 (154 aa).

An N-terminal signal peptide occupies residues 1 to 20 (MYKIQLLSCIALTLILVTNS). C78 and C126 are oxidised to a cystine. Residue N111 is glycosylated (N-linked (GlcNAc...) asparagine).

The protein belongs to the IL-2 family.

The protein localises to the secreted. Its function is as follows. Cytokine produced by activated CD4-positive helper T-cells and to a lesser extend activated CD8-positive T-cells and natural killer (NK) cells that plays pivotal roles in the immune response and tolerance. Binds to a receptor complex composed of either the high-affinity trimeric IL-2R (IL2RA/CD25, IL2RB/CD122 and IL2RG/CD132) or the low-affinity dimeric IL-2R (IL2RB and IL2RG). Interaction with the receptor leads to oligomerization and conformation changes in the IL-2R subunits resulting in downstream signaling starting with phosphorylation of JAK1 and JAK3. In turn, JAK1 and JAK3 phosphorylate the receptor to form a docking site leading to the phosphorylation of several substrates including STAT5. This process leads to activation of several pathways including STAT, phosphoinositide-3-kinase/PI3K and mitogen-activated protein kinase/MAPK pathways. Functions as a T-cell growth factor and can increase NK-cell cytolytic activity as well. Promotes strong proliferation of activated B-cells and subsequently immunoglobulin production. Plays a pivotal role in regulating the adaptive immune system by controlling the survival and proliferation of regulatory T-cells, which are required for the maintenance of immune tolerance. Moreover, participates in the differentiation and homeostasis of effector T-cell subsets, including Th1, Th2, Th17 as well as memory CD8-positive T-cells. This is Interleukin-2 (IL2) from Felis catus (Cat).